An 867-amino-acid chain; its full sequence is Leucine--tRNA ligase (867 aa).

The 'HIGH' region signature appears at 40–51; it reads PYPSGAGLHVGH. A 'KMSKS' region motif is present at residues 638–642; the sequence is KMSKS. K641 serves as a coordination point for ATP.

This sequence belongs to the class-I aminoacyl-tRNA synthetase family.

It is found in the cytoplasm. The catalysed reaction is tRNA(Leu) + L-leucine + ATP = L-leucyl-tRNA(Leu) + AMP + diphosphate. The chain is Leucine--tRNA ligase from Leptospira biflexa serovar Patoc (strain Patoc 1 / Ames).